Here is a 1072-residue protein sequence, read N- to C-terminus: Guanylyl cyclase C (1072 aa).

Residues 1-22 (MTSLLGLAVRLLLFQPTLMFWA) form the signal peptide. Over 23-429 (SQVRQKCHNG…PNDVPGLGPQ (407 aa)) the chain is Extracellular. N-linked (GlcNAc...) asparagine glycosylation is found at Asn-31, Asn-74, Asn-78, Asn-187, Asn-194, Asn-306, and Asn-401. A helical transmembrane segment spans residues 430–453 (ILMIAVFTLTGIVVVLLLIALLVL). Over 454-1072 (RKYRRDHELR…NNSDHDSTYF (619 aa)) the chain is Cytoplasmic. Residues 488-748 (LKIDDDRRRD…KIESTLAKIF (261 aa)) form the Protein kinase domain. The Guanylate cyclase domain occupies 823 to 953 (TIYFSDIVGF…DTVNTASRME (131 aa)).

It belongs to the adenylyl cyclase class-4/guanylyl cyclase family. Homotrimer. Interacts via its C-terminal region with PDZK2. Interacts with the lectin chaperone VIP36. Glycosylation at Asn-74 and/or Asn-78 is required for interaction with VIP36 while glycosylation at Asn-401 modulates ligand-mediated GC-C activation.

It is found in the cell membrane. The protein localises to the endoplasmic reticulum membrane. The enzyme catalyses GTP = 3',5'-cyclic GMP + diphosphate. In terms of biological role, guanylyl cyclase that catalyzes synthesis of cyclic GMP (cGMP) from GTP. Receptor for the E.coli heat-stable enterotoxin; E.coli enterotoxin markedly stimulates the accumulation of cGMP in mammalian cells expressing GUCY2C. In Rattus norvegicus (Rat), this protein is Guanylyl cyclase C (Gucy2c).